We begin with the raw amino-acid sequence, 113 residues long: Nitrogenase-stabilizing/protective protein NifW (113 aa).

It belongs to the NifW family. Homotrimer; associates with NifD.

In terms of biological role, may protect the nitrogenase Fe-Mo protein from oxidative damage. The polypeptide is Nitrogenase-stabilizing/protective protein NifW (Dechloromonas aromatica (strain RCB)).